A 314-amino-acid polypeptide reads, in one-letter code: Ribosomal protein L11 methyltransferase (314 aa).

Residues Thr-163, Gly-184, Asp-206, and Asn-248 each contribute to the S-adenosyl-L-methionine site.

It belongs to the methyltransferase superfamily. PrmA family.

The protein resides in the cytoplasm. The catalysed reaction is L-lysyl-[protein] + 3 S-adenosyl-L-methionine = N(6),N(6),N(6)-trimethyl-L-lysyl-[protein] + 3 S-adenosyl-L-homocysteine + 3 H(+). In terms of biological role, methylates ribosomal protein L11. This Lactobacillus delbrueckii subsp. bulgaricus (strain ATCC 11842 / DSM 20081 / BCRC 10696 / JCM 1002 / NBRC 13953 / NCIMB 11778 / NCTC 12712 / WDCM 00102 / Lb 14) protein is Ribosomal protein L11 methyltransferase.